Reading from the N-terminus, the 573-residue chain is Hemagglutinin-neuraminidase (573 aa).

Residues 1–27 (MQDSHGNTQILNQANSMVKRTWRLLFR) lie on the Intravirion side of the membrane. Residues 28–48 (IATLILLVSIFVLSLIIVLQS) form a helical membrane-spanning segment. At 49–573 (TPGNLQNDIN…DFQITLFLAA (525 aa)) the chain is on the virion surface side. Cystine bridges form between C173/C197, C187/C248, and C239/C252. The involved in neuraminidase activity stretch occupies residues 235-240 (NRKSCS). N-linked (GlcNAc...) asparagine; by host glycosylation is found at N258, N330, N339, and N347. Disulfide bonds link C345-C466, C377-C387, and C460-C470. The N-linked (GlcNAc...) asparagine; by host glycan is linked to N433. N502 and N530 each carry an N-linked (GlcNAc...) asparagine; by host glycan. Cysteines 540 and 551 form a disulfide.

This sequence belongs to the paramyxoviruses hemagglutinin-neuraminidase family. Homotetramer; composed of disulfide-linked homodimers. Interacts with F protein trimer.

The protein resides in the virion membrane. The protein localises to the host cell membrane. The catalysed reaction is Hydrolysis of alpha-(2-&gt;3)-, alpha-(2-&gt;6)-, alpha-(2-&gt;8)- glycosidic linkages of terminal sialic acid residues in oligosaccharides, glycoproteins, glycolipids, colominic acid and synthetic substrates.. In terms of biological role, attaches the virus to sialic acid-containing cell receptors and thereby initiating infection. Binding of HN protein to the receptor induces a conformational change that allows the F protein to trigger virion/cell membranes fusion. Functionally, neuraminidase activity ensures the efficient spread of the virus by dissociating the mature virions from the neuraminic acid containing glycoproteins. The protein is Hemagglutinin-neuraminidase (HN) of Homo sapiens (Human).